The chain runs to 102 residues: Protein transport protein sec61 subunit beta (102 aa).

Residues methionine 1–alanine 15 are compositionally biased toward polar residues. Positions methionine 1–serine 53 are disordered. The Cytoplasmic portion of the chain corresponds to methionine 1–proline 72. Residues glycine 41 to glycine 52 show a composition bias toward low complexity. Residues valine 73–alanine 93 form a helical membrane-spanning segment.

Belongs to the SEC61-beta family. In terms of assembly, heterotrimeric complex composed of SEC61, SBH1 and SSS1.

The protein resides in the endoplasmic reticulum membrane. Necessary for protein translocation in the endoplasmic reticulum. In Schizosaccharomyces pombe (strain 972 / ATCC 24843) (Fission yeast), this protein is Protein transport protein sec61 subunit beta (sbh1).